Consider the following 29-residue polypeptide: Kunitz-type trypsin inhibitor IVTI (29 aa).

The protein belongs to the protease inhibitor I3 (leguminous Kunitz-type inhibitor) family. Monomer and dimer.

Its function is as follows. Inhibits bovine trypsin but not chymotrypsin. Also inhibits trypsin-like enzymes from midgut of several lepidopteran species and inhibits larval development in those species. Has fungicidal activity against yeast C.buinensis. Has a bacteriostatic effect against E.coli. Is not cytotoxic. The protein is Kunitz-type trypsin inhibitor IVTI of Inga vera (River koko).